Reading from the N-terminus, the 456-residue chain is Bifunctional protein GlmU (456 aa).

Residues Met-1–Arg-229 are pyrophosphorylase. Residues Leu-11–Gly-14, Lys-25, Gln-76, Gly-81–Thr-82, Tyr-103–Asp-105, Gly-140, Glu-154, Asn-169, and Asn-227 contribute to the UDP-N-acetyl-alpha-D-glucosamine site. Mg(2+) is bound at residue Asp-105. Position 227 (Asn-227) interacts with Mg(2+). The linker stretch occupies residues Leu-230–Ser-250. The N-acetyltransferase stretch occupies residues Gly-251 to Lys-456. Positions 333 and 351 each coordinate UDP-N-acetyl-alpha-D-glucosamine. The Proton acceptor role is filled by His-363. Tyr-366 and Asn-377 together coordinate UDP-N-acetyl-alpha-D-glucosamine. Acetyl-CoA contacts are provided by residues Ala-380, Asn-386–Tyr-387, Ser-405, Ala-423, and Arg-440.

In the N-terminal section; belongs to the N-acetylglucosamine-1-phosphate uridyltransferase family. This sequence in the C-terminal section; belongs to the transferase hexapeptide repeat family. Homotrimer. The cofactor is Mg(2+).

The protein resides in the cytoplasm. It carries out the reaction alpha-D-glucosamine 1-phosphate + acetyl-CoA = N-acetyl-alpha-D-glucosamine 1-phosphate + CoA + H(+). The enzyme catalyses N-acetyl-alpha-D-glucosamine 1-phosphate + UTP + H(+) = UDP-N-acetyl-alpha-D-glucosamine + diphosphate. It participates in nucleotide-sugar biosynthesis; UDP-N-acetyl-alpha-D-glucosamine biosynthesis; N-acetyl-alpha-D-glucosamine 1-phosphate from alpha-D-glucosamine 6-phosphate (route II): step 2/2. The protein operates within nucleotide-sugar biosynthesis; UDP-N-acetyl-alpha-D-glucosamine biosynthesis; UDP-N-acetyl-alpha-D-glucosamine from N-acetyl-alpha-D-glucosamine 1-phosphate: step 1/1. It functions in the pathway bacterial outer membrane biogenesis; LPS lipid A biosynthesis. In terms of biological role, catalyzes the last two sequential reactions in the de novo biosynthetic pathway for UDP-N-acetylglucosamine (UDP-GlcNAc). The C-terminal domain catalyzes the transfer of acetyl group from acetyl coenzyme A to glucosamine-1-phosphate (GlcN-1-P) to produce N-acetylglucosamine-1-phosphate (GlcNAc-1-P), which is converted into UDP-GlcNAc by the transfer of uridine 5-monophosphate (from uridine 5-triphosphate), a reaction catalyzed by the N-terminal domain. In Erwinia tasmaniensis (strain DSM 17950 / CFBP 7177 / CIP 109463 / NCPPB 4357 / Et1/99), this protein is Bifunctional protein GlmU.